The primary structure comprises 479 residues: Bifunctional aspartate aminotransferase and glutamate/aspartate-prephenate aminotransferase (479 aa).

Residues 1 to 79 (MAATTTTSSS…VEVDISLSPR (79 aa)) constitute a chloroplast transit peptide. Gly-111 contributes to the L-aspartate binding site. Position 172–173 (172–173 (AK)) interacts with pyridoxal 5'-phosphate. Positions 197 and 247 each coordinate L-aspartate. Pyridoxal 5'-phosphate-binding positions include Asn-247, Tyr-279, and 307–309 (GFS). The residue at position 310 (Lys-310) is an N6-(pyridoxal phosphate)lysine. Arg-318 lines the pyridoxal 5'-phosphate pocket. Arg-449 lines the L-aspartate pocket.

It belongs to the class-I pyridoxal-phosphate-dependent aminotransferase family. In terms of assembly, homodimer. The cofactor is pyridoxal 5'-phosphate. As to expression, expressed in flowers, pistils, stamens, ovaries and at lower levels in leaves and sepals.

The protein localises to the plastid. Its subcellular location is the chloroplast. The catalysed reaction is L-aspartate + 2-oxoglutarate = oxaloacetate + L-glutamate. The enzyme catalyses L-arogenate + oxaloacetate = prephenate + L-aspartate. It carries out the reaction L-arogenate + 2-oxoglutarate = prephenate + L-glutamate. The protein operates within amino-acid biosynthesis; L-phenylalanine biosynthesis; L-arogenate from prephenate (L-Asp route): step 1/1. It participates in amino-acid biosynthesis; L-phenylalanine biosynthesis; L-arogenate from prephenate (L-Glu route): step 1/1. In terms of biological role, prokaryotic-type aspartate aminotransferase. Also has a prenate transaminase activity. Involved in the aromatic amino acids biosynthesis pathway via the arogenate route. Required for the transamination of prephenate into arogenate. Can use 2-oxoglutarate, oxaloacetate and prephenate as substrates, but not phenylpyruvate or 4-hydroxyphenylpyruvate. In Petunia hybrida (Petunia), this protein is Bifunctional aspartate aminotransferase and glutamate/aspartate-prephenate aminotransferase.